The sequence spans 184 residues: MSAEQIAGTGVIHGRFQPLHLGHLEYLLAGAERCRTLVVGITNPDPWTTTEETTDPERGLPESNPCTFYERYLMVEGALTEAGVSHERLRIVPFPHSFPERLAHYAPADARYFVTVYDDWGDAKLDRFHALGLRTEVMWRRTDKPVSGGRVRRSIAEGQPWEHLVPPAVARVVKECGIDERIRA.

The catalysed reaction is phosphonoformate + CTP = CMP-5'-phosphonoformate + diphosphate. Its pathway is secondary metabolite biosynthesis; bialaphos biosynthesis. Functionally, catalyzes the displacement of the beta- and gamma-phosphates of CTP by phosphonoformate to produce CMP-5'-phosphonoformate, an intermediate in the biosynthesis of phosphinothricin tripeptide (PTT), also known as bialaphos (BA), a natural-product antibiotic and potent herbicide. The polypeptide is Phosphonoformate cytidylyltransferase (Streptomyces viridochromogenes (strain DSM 40736 / JCM 4977 / BCRC 1201 / Tue 494)).